A 203-amino-acid chain; its full sequence is dITP/XTP pyrophosphatase (203 aa).

16 to 21 (SHNRGK) lines the substrate pocket. E48 and D77 together coordinate Mg(2+). Catalysis depends on D77, which acts as the Proton acceptor. Residues S78, 161–164 (FGYD), K184, and 189–190 (HR) contribute to the substrate site.

The protein belongs to the HAM1 NTPase family. Homodimer. Mg(2+) is required as a cofactor.

The enzyme catalyses XTP + H2O = XMP + diphosphate + H(+). It carries out the reaction dITP + H2O = dIMP + diphosphate + H(+). It catalyses the reaction ITP + H2O = IMP + diphosphate + H(+). Pyrophosphatase that catalyzes the hydrolysis of nucleoside triphosphates to their monophosphate derivatives, with a high preference for the non-canonical purine nucleotides XTP (xanthosine triphosphate), dITP (deoxyinosine triphosphate) and ITP. Seems to function as a house-cleaning enzyme that removes non-canonical purine nucleotides from the nucleotide pool, thus preventing their incorporation into DNA/RNA and avoiding chromosomal lesions. The protein is dITP/XTP pyrophosphatase of Rhodospirillum centenum (strain ATCC 51521 / SW).